Reading from the N-terminus, the 361-residue chain is tRNA 2-selenouridine synthase (361 aa).

Residues 14 to 137 (LIADTPIIDV…LRQTAIQATI (124 aa)) enclose the Rhodanese domain. Cys97 acts as the S-selanylcysteine intermediate in catalysis.

Belongs to the SelU family. Monomer.

The catalysed reaction is 5-methylaminomethyl-2-thiouridine(34) in tRNA + selenophosphate + (2E)-geranyl diphosphate + H2O + H(+) = 5-methylaminomethyl-2-selenouridine(34) in tRNA + (2E)-thiogeraniol + phosphate + diphosphate. It catalyses the reaction 5-methylaminomethyl-2-thiouridine(34) in tRNA + (2E)-geranyl diphosphate = 5-methylaminomethyl-S-(2E)-geranyl-thiouridine(34) in tRNA + diphosphate. It carries out the reaction 5-methylaminomethyl-S-(2E)-geranyl-thiouridine(34) in tRNA + selenophosphate + H(+) = 5-methylaminomethyl-2-(Se-phospho)selenouridine(34) in tRNA + (2E)-thiogeraniol. The enzyme catalyses 5-methylaminomethyl-2-(Se-phospho)selenouridine(34) in tRNA + H2O = 5-methylaminomethyl-2-selenouridine(34) in tRNA + phosphate. Functionally, involved in the post-transcriptional modification of the uridine at the wobble position (U34) of tRNA(Lys), tRNA(Glu) and tRNA(Gln). Catalyzes the conversion of 2-thiouridine (S2U-RNA) to 2-selenouridine (Se2U-RNA). Acts in a two-step process involving geranylation of 2-thiouridine (S2U) to S-geranyl-2-thiouridine (geS2U) and subsequent selenation of the latter derivative to 2-selenouridine (Se2U) in the tRNA chain. The protein is tRNA 2-selenouridine synthase of Escherichia coli O6:H1 (strain CFT073 / ATCC 700928 / UPEC).